Reading from the N-terminus, the 377-residue chain is Phospho-N-acetylmuramoyl-pentapeptide-transferase (377 aa).

The next 11 helical transmembrane spans lie at 9 to 29, 59 to 79, 85 to 105, 122 to 142, 155 to 175, 178 to 198, 210 to 230, 247 to 267, 274 to 294, 299 to 319, and 354 to 374; these read YITL…LVAG, TPTM…LLWA, FVWV…MDDY, FFWQ…AVSA, WVGS…VPFF, VSYP…IVGT, GLAI…AYVV, AAEL…FLWF, VFMG…IAVI, IVLF…MVQV, and QVVV…LSTL.

The protein belongs to the glycosyltransferase 4 family. MraY subfamily. It depends on Mg(2+) as a cofactor.

The protein resides in the cell inner membrane. It catalyses the reaction UDP-N-acetyl-alpha-D-muramoyl-L-alanyl-gamma-D-glutamyl-meso-2,6-diaminopimeloyl-D-alanyl-D-alanine + di-trans,octa-cis-undecaprenyl phosphate = di-trans,octa-cis-undecaprenyl diphospho-N-acetyl-alpha-D-muramoyl-L-alanyl-D-glutamyl-meso-2,6-diaminopimeloyl-D-alanyl-D-alanine + UMP. It participates in cell wall biogenesis; peptidoglycan biosynthesis. Its function is as follows. Catalyzes the initial step of the lipid cycle reactions in the biosynthesis of the cell wall peptidoglycan: transfers peptidoglycan precursor phospho-MurNAc-pentapeptide from UDP-MurNAc-pentapeptide onto the lipid carrier undecaprenyl phosphate, yielding undecaprenyl-pyrophosphoryl-MurNAc-pentapeptide, known as lipid I. The protein is Phospho-N-acetylmuramoyl-pentapeptide-transferase of Bordetella bronchiseptica (strain ATCC BAA-588 / NCTC 13252 / RB50) (Alcaligenes bronchisepticus).